The chain runs to 529 residues: V-set and immunoglobulin domain-containing protein 10 (529 aa).

Positions 1-18 (MMITSAVVLYLLLLSHQT) are cleaved as a signal peptide. Ig-like C2-type domains follow at residues 19–110 (VSEE…QTLS) and 129–217 (PATF…QELL). Residues 21-411 (EEQVQQFVIG…LNVKTSAGNG (391 aa)) are Extracellular-facing. 13 N-linked (GlcNAc...) asparagine glycosylation sites follow: Asn34, Asn35, Asn46, Asn135, Asn147, Asn159, Asn211, Asn269, Asn280, Asn284, Asn330, Asn357, and Asn376. A disulfide bond links Cys40 and Cys96. Cys150 and Cys199 are disulfide-bonded. The Ig-like C2-type 3 domain maps to 317 to 403 (PTGQPLATAL…GARELEVYLN (87 aa)). An intrachain disulfide couples Cys335 to Cys387. Residues 412-432 (GAIVGIFVSVLVMMIGIVVGV) form a helical membrane-spanning segment. Topologically, residues 433 to 529 (TVYTKRDRIC…PQRAELQPAV (97 aa)) are cytoplasmic.

It localises to the membrane. The protein is V-set and immunoglobulin domain-containing protein 10 (vsig10) of Danio rerio (Zebrafish).